We begin with the raw amino-acid sequence, 504 residues long: Galactokinase (504 aa).

Alpha-D-galactose is bound by residues arginine 47, aspartate 53, histidine 54, and aspartate 56. Glycine 150, glycine 152, serine 154, and serine 155 together coordinate ATP. Positions 196 and 200 each coordinate alpha-D-galactose. Aspartate 200 (proton acceptor) is an active-site residue. ATP contacts are provided by serine 244, asparagine 245, and lysine 246. Tyrosine 254 is an alpha-D-galactose binding site.

This sequence belongs to the GHMP kinase family. GalK subfamily.

It carries out the reaction alpha-D-galactose + ATP = alpha-D-galactose 1-phosphate + ADP + H(+). It participates in carbohydrate metabolism; galactose metabolism. Its function is as follows. Galactokinase is a key enzyme in the galactose metabolism where it catalyzes the conversion of alpha-D-galactose to galactose 1-phosphate. Can also induce the transcription of the gal genes in response to the organism being challenged with galactose as the sole source of carbon. This Candida parapsilosis (Yeast) protein is Galactokinase.